Reading from the N-terminus, the 51-residue chain is Large ribosomal subunit protein eL39 (51 aa).

This sequence belongs to the eukaryotic ribosomal protein eL39 family.

The sequence is that of Large ribosomal subunit protein eL39 from Thermococcus gammatolerans (strain DSM 15229 / JCM 11827 / EJ3).